The primary structure comprises 271 residues: Urease accessory protein UreD (271 aa).

Belongs to the UreD family. UreD, UreF and UreG form a complex that acts as a GTP-hydrolysis-dependent molecular chaperone, activating the urease apoprotein by helping to assemble the nickel containing metallocenter of UreC. The UreE protein probably delivers the nickel.

It localises to the cytoplasm. Its function is as follows. Required for maturation of urease via the functional incorporation of the urease nickel metallocenter. The polypeptide is Urease accessory protein UreD (Azorhizobium caulinodans (strain ATCC 43989 / DSM 5975 / JCM 20966 / LMG 6465 / NBRC 14845 / NCIMB 13405 / ORS 571)).